A 320-amino-acid polypeptide reads, in one-letter code: Lipoyl synthase (320 aa).

[4Fe-4S] cluster contacts are provided by cysteine 56, cysteine 61, cysteine 67, cysteine 82, cysteine 86, cysteine 89, and serine 295. The Radical SAM core domain maps to 68–284; it reads WNRRTATFMI…REEALKRGFA (217 aa). Residues 300-320 form a disordered region; sequence EQSAQAVARRTGAGRAAQTGD. Low complexity predominate over residues 303-320; the sequence is AQAVARRTGAGRAAQTGD.

It belongs to the radical SAM superfamily. Lipoyl synthase family. It depends on [4Fe-4S] cluster as a cofactor.

Its subcellular location is the cytoplasm. The enzyme catalyses [[Fe-S] cluster scaffold protein carrying a second [4Fe-4S](2+) cluster] + N(6)-octanoyl-L-lysyl-[protein] + 2 oxidized [2Fe-2S]-[ferredoxin] + 2 S-adenosyl-L-methionine + 4 H(+) = [[Fe-S] cluster scaffold protein] + N(6)-[(R)-dihydrolipoyl]-L-lysyl-[protein] + 4 Fe(3+) + 2 hydrogen sulfide + 2 5'-deoxyadenosine + 2 L-methionine + 2 reduced [2Fe-2S]-[ferredoxin]. The protein operates within protein modification; protein lipoylation via endogenous pathway; protein N(6)-(lipoyl)lysine from octanoyl-[acyl-carrier-protein]: step 2/2. In terms of biological role, catalyzes the radical-mediated insertion of two sulfur atoms into the C-6 and C-8 positions of the octanoyl moiety bound to the lipoyl domains of lipoate-dependent enzymes, thereby converting the octanoylated domains into lipoylated derivatives. The chain is Lipoyl synthase from Symbiobacterium thermophilum (strain DSM 24528 / JCM 14929 / IAM 14863 / T).